A 406-amino-acid polypeptide reads, in one-letter code: GTPase Obg (406 aa).

One can recognise an Obg domain in the interval 1–159 (MRFVDEAVIT…REIRLELKVL (159 aa)). A disordered region spans residues 120 to 143 (GGEGGLGNTHFKSSTNRAPRKCTT). The OBG-type G domain maps to 160 to 333 (ADVGLLGMPN…VVYYLMDQIE (174 aa)). Residues 166–173 (GMPNAGKS), 191–195 (FTTMV), 213–216 (DIPG), 283–286 (NKLD), and 314–316 (SGL) contribute to the GTP site. Mg(2+) contacts are provided by Ser-173 and Thr-193. Residues 381–406 (ESMMDDDDDFDDDEDDGDVESIYVRD) are disordered. Over residues 383-399 (MMDDDDDFDDDEDDGDV) the composition is skewed to acidic residues.

The protein belongs to the TRAFAC class OBG-HflX-like GTPase superfamily. OBG GTPase family. In terms of assembly, monomer. The cofactor is Mg(2+).

Its subcellular location is the cytoplasm. Functionally, an essential GTPase which binds GTP, GDP and possibly (p)ppGpp with moderate affinity, with high nucleotide exchange rates and a fairly low GTP hydrolysis rate. Plays a role in control of the cell cycle, stress response, ribosome biogenesis and in those bacteria that undergo differentiation, in morphogenesis control. The protein is GTPase Obg of Acinetobacter baumannii (strain ACICU).